Reading from the N-terminus, the 558-residue chain is MSFKTDAEIAQSSTMRPIGEIAAKLGLNVDNIEPYGHYKAKINPAEAFKLPQKQGRLILVTAINPTPAGEGKTTVTIGLADALRHIGKDSVIALREPSLGPVFGVKGGAAGGGYAQVLPMEDINLHFTGDFHAIGAANNLLAAMLDNHIYQGNELNIDPKRVLWRRVVDMNDRQLRNIIDGMGKPVDGVMRPDGFDITVASEVMAVFCLAKDISDLKERLGNILVAYAKDGSPVYAKDLKANGAMAALLKDAIKPNLVQTIEGTPAFVHGGPFANIAHGCNSVTATRLAKHLADYAVTEAGFGADLGAEKFCDIKCRLAGLKPDAAVVVATVRALKYNGGVERANLGEENLDALEKGLPNLLKHISNLKNVFGLPVVVALNRFVSDSDAELAMIEKACAEHGVEVSLTEVWGKGGAGGADLARKVVNAIESQTNNFGFAYDVELGIKDKIRAIAQKVYGAEDVDFSAEASAEIASLEKLGLDKMPICMAKTQYSLSDNAKLLGCPEDFRIAVRGITVSAGAGFIVALCGNMMKMPGLPKVPAAEKIDVDAEGVIHGLF.

66–73 (TPAGEGKT) provides a ligand contact to ATP.

This sequence belongs to the formate--tetrahydrofolate ligase family.

The enzyme catalyses (6S)-5,6,7,8-tetrahydrofolate + formate + ATP = (6R)-10-formyltetrahydrofolate + ADP + phosphate. It functions in the pathway one-carbon metabolism; tetrahydrofolate interconversion. The protein is Formate--tetrahydrofolate ligase of Neisseria meningitidis serogroup A / serotype 4A (strain DSM 15465 / Z2491).